The chain runs to 614 residues: MSTLKKISDEDRESKFGYVFAVSGPVVTAERMSGSAMYELVRVGYYELVGEIIRLEGDMATIQVYEETSGVTVGDPVLRTGKPLSVELGPGIMGSIFDGIQRPLKDINELTSSIYIPKGVNIPCLSRTQSWGFNPLNVKVGSHITGGDLYGLVHENTLVKHKLLVPPRAKGTVRYIAPPGNYTVDDIILETEFDGEINKWSMLQVWPVRQPRPVTEKLPANHPLLTGQRVLDSLFPCVQGGTTAIPGAFGCGKTVISQALSKYSNSDVIIYVGCGERGNEMSEVLRDFPELSVEIDGVTESIMKRTALVANTSNMPVAAREASIYTGITLSEYFRDMGYNVSMMADSTSRWAEALREISGRLAEMPADSGYPAYLGARLASFYERAGRVKCLGNPEREGSVSIVGAVSPPGGDFSDPVTSATLGIVQVFWGLDKKLAQRKHFPSINWLISYSKYMRALDDFYDKNFQEFVPLRTKVKEILQEEEDLSEIVQLVGKASLAETDKITLEVAKLLKDDFLQQNSYSAYDRFCPFYKTVGMLRNMIGFYDMARHAVETTAQSENKITWNVIRDSMGNILYQLSSMKFKDPVKDGEAKIKADFDQLYEDLQQAFRNLED.

247–254 (GAFGCGKT) lines the ATP pocket.

The protein belongs to the ATPase alpha/beta chains family. In terms of assembly, V-ATPase is a heteromultimeric enzyme made up of two complexes: the ATP-hydrolytic V1 complex and the proton translocation V0 complex. The V1 complex consists of three catalytic AB heterodimers that form a heterohexamer, three peripheral stalks each consisting of EG heterodimers, one central rotor including subunits D and F, and the regulatory subunits C and H. The proton translocation complex V0 consists of the proton transport subunit a, a ring of proteolipid subunits c9c'', rotary subunit d, subunits e and f, and the accessory subunits VhaAC45 and ATP6AP2.

The enzyme catalyses ATP + H2O + 4 H(+)(in) = ADP + phosphate + 5 H(+)(out). Its activity is regulated as follows. ATP hydrolysis occurs at the interface between the nucleotide-binding domains of subunits A and B. ATP hydrolysis triggers a conformational change in the subunits D and F, which induces a shift of subunit d. The c-ring is subsequently rotated and results in a continuous proton translocation across the membrane. Catalytic subunit of the V1 complex of vacuolar(H+)-ATPase (V-ATPase), a multisubunit enzyme composed of a peripheral complex (V1) that hydrolyzes ATP and a membrane integral complex (V0) that translocates protons. V-ATPase is responsible for acidifying and maintaining the pH of intracellular compartments and in some cell types, is targeted to the plasma membrane, where it is responsible for acidifying the extracellular environment. The chain is V-type proton ATPase catalytic subunit A (VhaA) from Aedes aegypti (Yellowfever mosquito).